Here is a 501-residue protein sequence, read N- to C-terminus: Cytochrome P450 3A31 (501 aa).

Residue Cys440 participates in heme binding.

It belongs to the cytochrome P450 family. Heme is required as a cofactor. Expressed constitutively in liver.

The protein resides in the endoplasmic reticulum membrane. The protein localises to the microsome membrane. It carries out the reaction an organic molecule + reduced [NADPH--hemoprotein reductase] + O2 = an alcohol + oxidized [NADPH--hemoprotein reductase] + H2O + H(+). Functionally, cytochromes P450 are a group of heme-thiolate monooxygenases. In liver microsomes, this enzyme is involved in an NADPH-dependent electron transport pathway. It oxidizes a variety of structurally unrelated compounds, including steroids, fatty acids, and xenobiotics. This Mesocricetus auratus (Golden hamster) protein is Cytochrome P450 3A31 (CYP3A31).